An 893-amino-acid chain; its full sequence is Translation initiation factor IF-2 (893 aa).

2 disordered regions span residues 135–169 and 201–300; these read KAKA…KAEE and ENEK…ESMD. The span at 201-224 shows a compositional bias: basic and acidic residues; it reads ENEKRWAEEEKARKEAEKTVDHHV. A compositionally biased stretch (low complexity) spans 251–265; the sequence is PSANAGNNANANAGA. The 170-residue stretch at 393 to 562 folds into the tr-type G domain; that stretch reads SRAPVVTIMG…LLEAEVLELK (170 aa). Residues 402–409 are G1; it reads GHVDHGKT. Residue 402 to 409 participates in GTP binding; sequence GHVDHGKT. A G2 region spans residues 427 to 431; the sequence is GITQH. The interval 448–451 is G3; that stretch reads DTPG. GTP contacts are provided by residues 448 to 452 and 502 to 505; these read DTPGH and NKMD. Residues 502 to 505 are G4; sequence NKMD. Positions 538–540 are G5; that stretch reads SAK.

It belongs to the TRAFAC class translation factor GTPase superfamily. Classic translation factor GTPase family. IF-2 subfamily.

It localises to the cytoplasm. One of the essential components for the initiation of protein synthesis. Protects formylmethionyl-tRNA from spontaneous hydrolysis and promotes its binding to the 30S ribosomal subunits. Also involved in the hydrolysis of GTP during the formation of the 70S ribosomal complex. The protein is Translation initiation factor IF-2 of Shewanella halifaxensis (strain HAW-EB4).